The sequence spans 65 residues: Large ribosomal subunit protein bL35 (65 aa).

The protein belongs to the bacterial ribosomal protein bL35 family.

In Parabacteroides distasonis (strain ATCC 8503 / DSM 20701 / CIP 104284 / JCM 5825 / NCTC 11152), this protein is Large ribosomal subunit protein bL35.